Reading from the N-terminus, the 193-residue chain is dTTP/UTP pyrophosphatase (193 aa).

Asp77 functions as the Proton acceptor in the catalytic mechanism.

It belongs to the Maf family. YhdE subfamily. Requires a divalent metal cation as cofactor.

The protein resides in the cytoplasm. It carries out the reaction dTTP + H2O = dTMP + diphosphate + H(+). The catalysed reaction is UTP + H2O = UMP + diphosphate + H(+). Nucleoside triphosphate pyrophosphatase that hydrolyzes dTTP and UTP. May have a dual role in cell division arrest and in preventing the incorporation of modified nucleotides into cellular nucleic acids. The chain is dTTP/UTP pyrophosphatase from Parabacteroides distasonis (strain ATCC 8503 / DSM 20701 / CIP 104284 / JCM 5825 / NCTC 11152).